We begin with the raw amino-acid sequence, 264 residues long: Thymidylate synthase (264 aa).

Arginine 21 contacts dUMP. Histidine 51 serves as a coordination point for (6R)-5,10-methylene-5,6,7,8-tetrahydrofolate. 126–127 is a binding site for dUMP; the sequence is RR. Catalysis depends on cysteine 146, which acts as the Nucleophile. DUMP contacts are provided by residues 166–169, asparagine 177, and 207–209; these read RSAD and HLY. Aspartate 169 is a binding site for (6R)-5,10-methylene-5,6,7,8-tetrahydrofolate. Residue alanine 263 coordinates (6R)-5,10-methylene-5,6,7,8-tetrahydrofolate.

Belongs to the thymidylate synthase family. Bacterial-type ThyA subfamily. Homodimer.

It is found in the cytoplasm. The catalysed reaction is dUMP + (6R)-5,10-methylene-5,6,7,8-tetrahydrofolate = 7,8-dihydrofolate + dTMP. The protein operates within pyrimidine metabolism; dTTP biosynthesis. Its function is as follows. Catalyzes the reductive methylation of 2'-deoxyuridine-5'-monophosphate (dUMP) to 2'-deoxythymidine-5'-monophosphate (dTMP) while utilizing 5,10-methylenetetrahydrofolate (mTHF) as the methyl donor and reductant in the reaction, yielding dihydrofolate (DHF) as a by-product. This enzymatic reaction provides an intracellular de novo source of dTMP, an essential precursor for DNA biosynthesis. This chain is Thymidylate synthase, found in Nitrosomonas europaea (strain ATCC 19718 / CIP 103999 / KCTC 2705 / NBRC 14298).